The chain runs to 110 residues: Large ribosomal subunit protein uL22 (110 aa).

The protein belongs to the universal ribosomal protein uL22 family. In terms of assembly, part of the 50S ribosomal subunit.

In terms of biological role, this protein binds specifically to 23S rRNA; its binding is stimulated by other ribosomal proteins, e.g. L4, L17, and L20. It is important during the early stages of 50S assembly. It makes multiple contacts with different domains of the 23S rRNA in the assembled 50S subunit and ribosome. The globular domain of the protein is located near the polypeptide exit tunnel on the outside of the subunit, while an extended beta-hairpin is found that lines the wall of the exit tunnel in the center of the 70S ribosome. In Yersinia enterocolitica serotype O:8 / biotype 1B (strain NCTC 13174 / 8081), this protein is Large ribosomal subunit protein uL22.